The primary structure comprises 1138 residues: BMP-2-inducible protein kinase (1138 aa).

S13 carries the post-translational modification Phosphoserine. Positions 48–313 constitute a Protein kinase domain; that stretch reads VTLEESLAEG…DIFQVSYFAF (266 aa). ATP is bound by residues 54–62 and K76; that span reads LAEGGFSTV. D177 acts as the Proton acceptor in catalysis. 3 disordered regions span residues 355–435, 638–831, and 906–1018; these read TDTI…RVLQ, NRLG…PADA, and PRSV…EFLT. Residues 358–390 are compositionally biased toward polar residues; that stretch reads IGPTETSIAPRQRPKANSTAATSSVLTIQSSAT. The span at 417 to 435 shows a compositional bias: low complexity; sequence VLMVQGPPQQPPQQHRVLQ. A Phosphoserine modification is found at S676. Over residues 684–701 the composition is skewed to polar residues; that stretch reads HSPNQKSITANLTKNGGS. Residues 706–715 are compositionally biased toward basic and acidic residues; it reads KDQRAGKKTS. Phosphoserine is present on residues S733, S806, and S807. Basic and acidic residues predominate over residues 787–813; sequence DKHSSDSECEQAKTKRGDTSSLRRDKP. T819 bears the Phosphothreonine mark. S908 bears the Phosphoserine mark. Positions 915 to 926 are enriched in polar residues; that stretch reads TPFQPFSVSASK. Over residues 951–965 the composition is skewed to basic residues; the sequence is VKQRSLQKLSSRQRR. Phosphoserine occurs at positions 1010, 1012, 1013, 1020, 1022, 1087, and 1091. Residues 1117 to 1138 are disordered; sequence TPQQSQPVELDPFGAAPFPSKQ.

This sequence belongs to the protein kinase superfamily. Ser/Thr protein kinase family. Autophosphorylated. In terms of tissue distribution, expressed in osteocytes and osteoblasts.

The protein resides in the nucleus. The enzyme catalyses L-seryl-[protein] + ATP = O-phospho-L-seryl-[protein] + ADP + H(+). It catalyses the reaction L-threonyl-[protein] + ATP = O-phospho-L-threonyl-[protein] + ADP + H(+). Its function is as follows. May be involved in osteoblast differentiation. The sequence is that of BMP-2-inducible protein kinase (Bmp2k) from Mus musculus (Mouse).